A 251-amino-acid chain; its full sequence is Small ribosomal subunit protein uS2 (251 aa).

It belongs to the universal ribosomal protein uS2 family.

The sequence is that of Small ribosomal subunit protein uS2 from Synechococcus elongatus (strain ATCC 33912 / PCC 7942 / FACHB-805) (Anacystis nidulans R2).